Here is a 407-residue protein sequence, read N- to C-terminus: Polygalacturonase (407 aa).

Positions 1 to 26 are cleaved as a signal peptide; that stretch reads MAPHLNIVPSMFVLLLLFISASKVQP. 2 PbH1 repeats span residues 180-206 and 207-228; these read CKNI…HMGK and SEGV…SIGD. An N-linked (GlcNAc...) asparagine glycan is attached at asparagine 182. Aspartate 221 functions as the Proton donor in the catalytic mechanism. A disulfide bridge links cysteine 223 with cysteine 240. Residue histidine 244 is part of the active site. 2 PbH1 repeats span residues 260-281 and 290-311; these read VEGI…RIKT and VSEI…LIDQ. N-linked (GlcNAc...) asparagine glycosylation is found at asparagine 267, asparagine 272, asparagine 302, and asparagine 331. 2 disulfides stabilise this stretch: cysteine 351–cysteine 357 and cysteine 379–cysteine 395. The stretch at 357-384 is one PbH1 5 repeat; the sequence is CQNVELADIDIQHNGAEPATSQCLNVKP.

The protein belongs to the glycosyl hydrolase 28 family. Pollen.

The protein localises to the secreted. The protein resides in the cell wall. The enzyme catalyses (1,4-alpha-D-galacturonosyl)n+m + H2O = (1,4-alpha-D-galacturonosyl)n + (1,4-alpha-D-galacturonosyl)m.. In terms of biological role, may function in the depolymerization of the pectin in its walls during pollen tube elongation, or in that of the pistil during pollination. The chain is Polygalacturonase (G9) from Gossypium barbadense (Sea Island cotton).